We begin with the raw amino-acid sequence, 484 residues long: Cobyric acid synthase (484 aa).

One can recognise a GATase cobBQ-type domain in the interval 251 to 438 (ALKIAVPVLS…LHGLFGNDEY (188 aa)). Residue Cys-333 is the Nucleophile of the active site. His-430 is a catalytic residue.

This sequence belongs to the CobB/CobQ family. CobQ subfamily.

It functions in the pathway cofactor biosynthesis; adenosylcobalamin biosynthesis. Catalyzes amidations at positions B, D, E, and G on adenosylcobyrinic A,C-diamide. NH(2) groups are provided by glutamine, and one molecule of ATP is hydrogenolyzed for each amidation. This Allorhizobium ampelinum (strain ATCC BAA-846 / DSM 112012 / S4) (Agrobacterium vitis (strain S4)) protein is Cobyric acid synthase.